Reading from the N-terminus, the 532-residue chain is Glutamate--cysteine ligase (532 aa).

It belongs to the glutamate--cysteine ligase type 1 family. Type 1 subfamily.

The catalysed reaction is L-cysteine + L-glutamate + ATP = gamma-L-glutamyl-L-cysteine + ADP + phosphate + H(+). It functions in the pathway sulfur metabolism; glutathione biosynthesis; glutathione from L-cysteine and L-glutamate: step 1/2. The chain is Glutamate--cysteine ligase from Pseudomonas fluorescens (strain Pf0-1).